Consider the following 340-residue polypeptide: 3-isopropylmalate dehydrogenase (340 aa).

Residues arginine 88, arginine 98, arginine 122, and aspartate 212 each coordinate substrate. Mg(2+) is bound by residues aspartate 212, aspartate 236, and aspartate 240. 272 to 284 contributes to the NAD(+) binding site; that stretch reads GSAPDIAGQGIAD.

It belongs to the isocitrate and isopropylmalate dehydrogenases family. LeuB type 2 subfamily. Homodimer. Mg(2+) serves as cofactor. The cofactor is Mn(2+).

Its subcellular location is the cytoplasm. It catalyses the reaction (2R,3S)-3-isopropylmalate + NAD(+) = 4-methyl-2-oxopentanoate + CO2 + NADH. Its pathway is amino-acid biosynthesis; L-leucine biosynthesis; L-leucine from 3-methyl-2-oxobutanoate: step 3/4. Catalyzes the oxidation of 3-carboxy-2-hydroxy-4-methylpentanoate (3-isopropylmalate) to 3-carboxy-4-methyl-2-oxopentanoate. The product decarboxylates to 4-methyl-2 oxopentanoate. This chain is 3-isopropylmalate dehydrogenase (leuB), found in Corynebacterium glutamicum (strain ATCC 13032 / DSM 20300 / JCM 1318 / BCRC 11384 / CCUG 27702 / LMG 3730 / NBRC 12168 / NCIMB 10025 / NRRL B-2784 / 534).